The primary structure comprises 41 residues: Large ribosomal subunit protein bL36 (41 aa).

It belongs to the bacterial ribosomal protein bL36 family.

The chain is Large ribosomal subunit protein bL36 from Methylorubrum extorquens (strain CM4 / NCIMB 13688) (Methylobacterium extorquens).